The chain runs to 216 residues: uncharacterized protein (216 aa).

S-adenosyl-L-methionine contacts are provided by glycine 56 and glutamate 77.

Belongs to the methyltransferase superfamily. YrrT family.

Its function is as follows. Could be a S-adenosyl-L-methionine-dependent methyltransferase. This is an uncharacterized protein from Alkaliphilus oremlandii (strain OhILAs) (Clostridium oremlandii (strain OhILAs)).